We begin with the raw amino-acid sequence, 490 residues long: Cardiolipin synthase 1 (490 aa).

A run of 2 helical transmembrane segments spans residues Ile9–Ile29 and Trp42–Leu62. 2 consecutive PLD phosphodiesterase domains span residues Met225–Tyr252 and Gln403–Ser430. Catalysis depends on residues His230, Lys232, Asp237, His408, Lys410, and Asp415.

The protein belongs to the phospholipase D family. Cardiolipin synthase subfamily.

The protein localises to the cell membrane. The enzyme catalyses 2 a 1,2-diacyl-sn-glycero-3-phospho-(1'-sn-glycerol) = a cardiolipin + glycerol. Its function is as follows. Catalyzes the reversible phosphatidyl group transfer from one phosphatidylglycerol molecule to another to form cardiolipin (CL) (diphosphatidylglycerol) and glycerol. This is Cardiolipin synthase 1 (cls1) from Staphylococcus epidermidis (strain ATCC 12228 / FDA PCI 1200).